The following is a 353-amino-acid chain: Fe(3+) ions import ATP-binding protein FbpC (353 aa).

An ABC transporter domain is found at 9–239 (VVFENVRKTF…PASSFIADFM (231 aa)). 41 to 48 (GPSGCGKT) serves as a coordination point for ATP.

Belongs to the ABC transporter superfamily. Fe(3+) ion importer (TC 3.A.1.10) family. As to quaternary structure, the complex is composed of two ATP-binding proteins (FbpC), two transmembrane proteins (FbpB) and a solute-binding protein (FbpA).

The protein resides in the cell inner membrane. The catalysed reaction is Fe(3+)(out) + ATP + H2O = Fe(3+)(in) + ADP + phosphate + H(+). In terms of biological role, part of the ABC transporter complex FbpABC involved in Fe(3+) ions import. Responsible for energy coupling to the transport system. This is Fe(3+) ions import ATP-binding protein FbpC from Agrobacterium fabrum (strain C58 / ATCC 33970) (Agrobacterium tumefaciens (strain C58)).